The following is a 406-amino-acid chain: Olfactomedin-like protein 3 (406 aa).

The first 21 residues, 1 to 21 (MGPSTPLLILFLLSWSGPLQG), serve as a signal peptide directing secretion. A coiled-coil region spans residues 25-101 (HLVEYMERRL…REVDYLETQN (77 aa)). Residues 134-401 (DCGYTISQVR…QIVYKLEMRK (268 aa)) enclose the Olfactomedin-like domain. A disulfide bond links cysteine 135 and cysteine 328. N-linked (GlcNAc...) asparagine glycosylation is found at asparagine 177 and asparagine 248.

It belongs to the OLFML3 family. As to expression, abundant in placenta, moderate in liver and heart, whereas fairly weak in other tissues examined. On term placenta, mainly localized extracellularly surrounding the syncytiotrophoblastic cells and very rarely expressed in the maternal decidua layer.

The protein localises to the secreted. In terms of biological role, secreted scaffold protein that plays an essential role in dorsoventral patterning during early development. Stabilizes axial formation by restricting chordin (CHRD) activity on the dorsal side. Acts by facilitating the association between the tolloid proteases and their substrate chordin (CHRD), leading to enhance chordin (CHRD) degradation. May have matrix-related function involved in placental and embryonic development, or play a similar role in other physiological processes. This chain is Olfactomedin-like protein 3 (OLFML3), found in Homo sapiens (Human).